A 234-amino-acid polypeptide reads, in one-letter code: Adenosine 5'-phosphosulfate reductase (234 aa).

[4Fe-4S] cluster contacts are provided by cysteine 120, cysteine 121, cysteine 203, and cysteine 206. Catalysis depends on cysteine 229, which acts as the Nucleophile; cysteine thiosulfonate intermediate.

The protein belongs to the PAPS reductase family. CysH subfamily. Requires [4Fe-4S] cluster as cofactor.

Its subcellular location is the cytoplasm. The catalysed reaction is [thioredoxin]-disulfide + sulfite + AMP + 2 H(+) = adenosine 5'-phosphosulfate + [thioredoxin]-dithiol. The protein operates within sulfur metabolism; hydrogen sulfide biosynthesis; sulfite from sulfate. In terms of biological role, catalyzes the formation of sulfite from adenosine 5'-phosphosulfate (APS) using thioredoxin as an electron donor. The protein is Adenosine 5'-phosphosulfate reductase of Bacillus cereus (strain ATCC 14579 / DSM 31 / CCUG 7414 / JCM 2152 / NBRC 15305 / NCIMB 9373 / NCTC 2599 / NRRL B-3711).